The sequence spans 641 residues: Chaperone protein HtpG (641 aa).

Positions 1 to 351 (MTQSVHAETH…SNDLPLNVSR (351 aa)) are a; substrate-binding. Residues 352-568 (EILQDNKVTV…AHGMSTQMIK (217 aa)) form a b region. Positions 569–641 (LMRAAGQPVP…SRINRLLLQA (73 aa)) are c.

It belongs to the heat shock protein 90 family. Homodimer.

It localises to the cytoplasm. Functionally, molecular chaperone. Has ATPase activity. In Aeromonas hydrophila subsp. hydrophila (strain ATCC 7966 / DSM 30187 / BCRC 13018 / CCUG 14551 / JCM 1027 / KCTC 2358 / NCIMB 9240 / NCTC 8049), this protein is Chaperone protein HtpG.